The sequence spans 215 residues: Cytidylate kinase (215 aa).

10-18 (GPAASGKGT) contributes to the ATP binding site.

The protein belongs to the cytidylate kinase family. Type 1 subfamily.

Its subcellular location is the cytoplasm. It catalyses the reaction CMP + ATP = CDP + ADP. The catalysed reaction is dCMP + ATP = dCDP + ADP. The chain is Cytidylate kinase from Bartonella tribocorum (strain CIP 105476 / IBS 506).